We begin with the raw amino-acid sequence, 295 residues long: Ribosomal RNA small subunit methyltransferase A (295 aa).

S-adenosyl-L-methionine-binding residues include N29, L31, G56, E77, D102, and N128.

This sequence belongs to the class I-like SAM-binding methyltransferase superfamily. rRNA adenine N(6)-methyltransferase family. RsmA subfamily.

Its subcellular location is the cytoplasm. It carries out the reaction adenosine(1518)/adenosine(1519) in 16S rRNA + 4 S-adenosyl-L-methionine = N(6)-dimethyladenosine(1518)/N(6)-dimethyladenosine(1519) in 16S rRNA + 4 S-adenosyl-L-homocysteine + 4 H(+). Functionally, specifically dimethylates two adjacent adenosines (A1518 and A1519) in the loop of a conserved hairpin near the 3'-end of 16S rRNA in the 30S particle. May play a critical role in biogenesis of 30S subunits. The sequence is that of Ribosomal RNA small subunit methyltransferase A from Listeria monocytogenes serovar 1/2a (strain ATCC BAA-679 / EGD-e).